A 157-amino-acid chain; its full sequence is Crossover junction endodeoxyribonuclease RuvC (157 aa).

Catalysis depends on residues Asp7, Glu67, and Asp140. Mg(2+) contacts are provided by Asp7, Glu67, and Asp140.

It belongs to the RuvC family. Homodimer which binds Holliday junction (HJ) DNA. The HJ becomes 2-fold symmetrical on binding to RuvC with unstacked arms; it has a different conformation from HJ DNA in complex with RuvA. In the full resolvosome a probable DNA-RuvA(4)-RuvB(12)-RuvC(2) complex forms which resolves the HJ. Requires Mg(2+) as cofactor.

It is found in the cytoplasm. It carries out the reaction Endonucleolytic cleavage at a junction such as a reciprocal single-stranded crossover between two homologous DNA duplexes (Holliday junction).. Its function is as follows. The RuvA-RuvB-RuvC complex processes Holliday junction (HJ) DNA during genetic recombination and DNA repair. Endonuclease that resolves HJ intermediates. Cleaves cruciform DNA by making single-stranded nicks across the HJ at symmetrical positions within the homologous arms, yielding a 5'-phosphate and a 3'-hydroxyl group; requires a central core of homology in the junction. The consensus cleavage sequence is 5'-(A/T)TT(C/G)-3'. Cleavage occurs on the 3'-side of the TT dinucleotide at the point of strand exchange. HJ branch migration catalyzed by RuvA-RuvB allows RuvC to scan DNA until it finds its consensus sequence, where it cleaves and resolves the cruciform DNA. The polypeptide is Crossover junction endodeoxyribonuclease RuvC (Rickettsia bellii (strain RML369-C)).